The primary structure comprises 233 residues: Probable GTP-binding protein EngB (233 aa).

Residues threonine 31–proline 205 form the EngB-type G domain. Residues glycine 39–serine 46, glycine 66–leucine 70, aspartate 84–glycine 87, threonine 151–aspartate 154, and phenylalanine 184–serine 186 each bind GTP. Positions 46 and 68 each coordinate Mg(2+).

The protein belongs to the TRAFAC class TrmE-Era-EngA-EngB-Septin-like GTPase superfamily. EngB GTPase family. Mg(2+) serves as cofactor.

Functionally, necessary for normal cell division and for the maintenance of normal septation. The chain is Probable GTP-binding protein EngB from Photobacterium profundum (strain SS9).